The primary structure comprises 456 residues: Argininosuccinate lyase (456 aa).

Belongs to the lyase 1 family. Argininosuccinate lyase subfamily.

It localises to the cytoplasm. The enzyme catalyses 2-(N(omega)-L-arginino)succinate = fumarate + L-arginine. Its pathway is amino-acid biosynthesis; L-arginine biosynthesis; L-arginine from L-ornithine and carbamoyl phosphate: step 3/3. The polypeptide is Argininosuccinate lyase (Listeria monocytogenes serotype 4b (strain F2365)).